The sequence spans 955 residues: Leucine-rich repeat-containing G-protein coupled receptor 4 (955 aa).

An N-terminal signal peptide occupies residues 1 to 21 (MGCPGWPLALFALLLASCSGG). The Extracellular portion of the chain corresponds to 22 to 547 (PSGVSSPAPC…LLGSWMIRLT (526 aa)). An LRRNT domain is found at 26–59 (SSPAPCPAPCACDLDGGADCSGKGLVTVPDGLSV). Intrachain disulfides connect Cys-31/Cys-37 and Cys-35/Cys-45. LRR repeat units lie at residues 57 to 81 (LSVFTHSLDLSMNNITKLPEGAFKG), 83 to 105 (PYLEELRLAGNDLSIIHPMALSG), 106 to 129 (LKELKVLTLQNNQLKTVPSESLKG), 131 to 153 (VSLQSLRLDANHIVTVPEDSFEG), 155 to 177 (VQLRHLWLDDNSLTEVPIRPLSN), 178 to 201 (LPSLQALTLALNKISHIPDYAFSN), 203 to 225 (SSLVVLHLHNNKIRTLGPHCFHG), 226 to 249 (LDNLEALDLNYNNLIDFPDSIRSL), 250 to 272 (PNLKELGFHSNSITIIPDGAFVK), and 274 to 296 (PLLRTIHLYDNPLSFVGNSAFQN). The N-linked (GlcNAc...) asparagine glycan is linked to Asn-201. Residues Asn-296 and Asn-316 are each glycosylated (N-linked (GlcNAc...) asparagine). LRR repeat units lie at residues 320 to 343 (TNNLESLTLTGTKIRSIPIKFCQE), 345 to 365 (KMLRTLDLSYNEISALVGFEG), 366 to 389 (CSSLEEVYLQNNQIQEVQNETFQG), 390 to 413 (LAALRMLDLSRNRIHTIHKEAFVT), and 415 to 437 (KALTNLDLSFNDLTAFPTAGLHG). A disulfide bond links Cys-341 and Cys-366. An N-linked (GlcNAc...) asparagine glycan is attached at Asn-384. Cystine bridges form between Cys-472-Cys-525 and Cys-473-Cys-478. The chain crosses the membrane as a helical span at residues 548–568 (VWFIFLLALIFNVIVIVTMFA). The Cytoplasmic segment spans residues 569–578 (SCSQLTSSKL). Residues 579–599 (FIGLIAVSNLFMGVYTGTLTV) form a helical membrane-spanning segment. Residues 600 to 623 (LDTISWGQFAEFGIWWETGNGCKV) are Extracellular-facing. A disulfide bond links Cys-621 and Cys-696. Residues 624 to 644 (AGFLAIFSSESAIFFLMLAAI) form a helical membrane-spanning segment. At 645–666 (ERSLSAKDIIKKEKHQHLRKFQ) the chain is on the cytoplasmic side. The chain crosses the membrane as a helical span at residues 667–687 (VASLLAVLLAAAAGCLPLFHI). At 688 to 706 (GEFSSSPLCLPFPTGETPS) the chain is on the extracellular side. Residues 707–727 (LGFTVTLVLLNSLAFLIMVIT) traverse the membrane as a helical segment. Topologically, residues 728–759 (YTKLYCTIEKEDLSENAESSMIKHVAWLIFTN) are cytoplasmic. Residues 760–780 (CIFFCPVAFFSFAPLITAIYI) traverse the membrane as a helical segment. The Extracellular segment spans residues 781–786 (SPEIMK). A helical membrane pass occupies residues 787 to 807 (SVTLIFLPLPACLNPVLYVFF). Residues 808 to 955 (NPKFKEDWKL…YAYNIPRMKD (148 aa)) lie on the Cytoplasmic side of the membrane.

Belongs to the G-protein coupled receptor 1 family.

It localises to the cell membrane. Functionally, receptor for R-spondins that potentiates the canonical Wnt signaling pathway and is involved in the formation of various organs. Upon binding to R-spondins (RSPO1, RSPO2, RSPO3 or RSPO4), associates with phosphorylated LRP6 and frizzled receptors that are activated by extracellular Wnt receptors, triggering the canonical Wnt signaling pathway to increase expression of target genes. In contrast to classical G-protein coupled receptors, does not activate heterotrimeric G-proteins to transduce the signal. Its function as activator of the Wnt signaling pathway is required for the development of various organs, including liver, kidney, intestine, bone, reproductive tract and eye. May play a role in regulating the circadian rhythms of plasma lipids. Required for proper development of GnRH neurons (gonadotropin-releasing hormone expressing neurons) that control the release of reproductive hormones from the pituitary gland. The sequence is that of Leucine-rich repeat-containing G-protein coupled receptor 4 (lgr4) from Xenopus tropicalis (Western clawed frog).